A 288-amino-acid chain; its full sequence is Protease HtpX (288 aa).

2 consecutive transmembrane segments (helical) span residues 5 to 25 (IALF…VMSL) and 35 to 55 (GLLV…LLLS). H140 contacts Zn(2+). E141 is a catalytic residue. H144 is a binding site for Zn(2+). Transmembrane regions (helical) follow at residues 155-175 (LLQG…GGII) and 194-214 (IIVF…SMWF). Zn(2+) is bound at residue E219.

The protein belongs to the peptidase M48B family. Requires Zn(2+) as cofactor.

The protein resides in the cell inner membrane. The protein is Protease HtpX of Stenotrophomonas maltophilia (strain K279a).